The following is a 360-amino-acid chain: Flavin-dependent trigonelline monooxygenase, oxygenase component (360 aa).

The protein belongs to the bacterial luciferase oxidoreductase family. As to quaternary structure, homodimer. The trigonelline monooxygenase is composed of a reductase component TgnA and an oxygenase component TgnB.

It carries out the reaction N-methylnicotinate + FMNH2 + O2 = (Z)-2-((N-methylformamido)methylene)-5-hydroxybutanolactone + FMN + H(+). The enzyme catalyses N-methylnicotinate + FADH2 + O2 = (Z)-2-((N-methylformamido)methylene)-5-hydroxybutanolactone + FAD + H(+). Functionally, involved in the degradation of the pyridine ring of trigonelline (TG; N-methylnicotinate) into succinate and methylamine as carbon and nitrogen sources, respectively. Catalyzes the insertion of two oxygens, followed by a ring cleavage of trigonelline to yield (Z)-2-((N-methylformamido)methylene)-5-hydroxybutyrolactone (MFMB). It is able to use reduced FMN or FAD. The polypeptide is Flavin-dependent trigonelline monooxygenase, oxygenase component (Acinetobacter baylyi (strain ATCC 33305 / BD413 / ADP1)).